A 139-amino-acid chain; its full sequence is ATP synthase epsilon chain (139 aa).

The protein belongs to the ATPase epsilon chain family. In terms of assembly, F-type ATPases have 2 components, CF(1) - the catalytic core - and CF(0) - the membrane proton channel. CF(1) has five subunits: alpha(3), beta(3), gamma(1), delta(1), epsilon(1). CF(0) has three main subunits: a, b and c.

The protein localises to the cell membrane. Functionally, produces ATP from ADP in the presence of a proton gradient across the membrane. In Symbiobacterium thermophilum (strain DSM 24528 / JCM 14929 / IAM 14863 / T), this protein is ATP synthase epsilon chain.